The sequence spans 248 residues: Large ribosomal subunit protein uL29m (248 aa).

2 disordered regions span residues 77–107 and 223–248; these read VSKY…GFFG and AYEP…PPSS.

Belongs to the universal ribosomal protein uL29 family. In terms of assembly, component of the mitochondrial large ribosomal subunit. Mature mitochondrial ribosomes consist of a small (37S) and a large (54S) subunit. The 37S subunit contains at least 33 different proteins and 1 molecule of RNA (15S). The 54S subunit contains at least 45 different proteins and 1 molecule of RNA (21S).

It localises to the mitochondrion. The protein is Large ribosomal subunit protein uL29m (MRPL4) of Ajellomyces capsulatus (strain NAm1 / WU24) (Darling's disease fungus).